Here is a 340-residue protein sequence, read N- to C-terminus: ATP-dependent 6-phosphofructokinase (340 aa).

An ATP-binding site is contributed by Gly-11. 21–25 (RAVVR) serves as a coordination point for ADP. ATP contacts are provided by residues 72–73 (RY) and 102–105 (GDGS). Asp-103 contacts Mg(2+). Position 125-127 (125-127 (TID)) interacts with substrate. The active-site Proton acceptor is the Asp-127. Residue Arg-154 participates in ADP binding. Residues Arg-162 and 169–171 (MGR) each bind substrate. ADP-binding positions include 185 to 187 (GAD) and 213 to 215 (KHH). Residues Glu-222, Arg-244, and 250–253 (HLLR) contribute to the substrate site.

It belongs to the phosphofructokinase type A (PFKA) family. ATP-dependent PFK group I subfamily. Prokaryotic clade 'B1' sub-subfamily. Homotetramer. Mg(2+) serves as cofactor.

The protein localises to the cytoplasm. The enzyme catalyses beta-D-fructose 6-phosphate + ATP = beta-D-fructose 1,6-bisphosphate + ADP + H(+). Its pathway is carbohydrate degradation; glycolysis; D-glyceraldehyde 3-phosphate and glycerone phosphate from D-glucose: step 3/4. Its activity is regulated as follows. Allosterically activated by ADP and other diphosphonucleosides, and allosterically inhibited by phosphoenolpyruvate. Functionally, catalyzes the phosphorylation of D-fructose 6-phosphate to fructose 1,6-bisphosphate by ATP, the first committing step of glycolysis. The chain is ATP-dependent 6-phosphofructokinase from Streptococcus agalactiae serotype Ia (strain ATCC 27591 / A909 / CDC SS700).